A 736-amino-acid chain; its full sequence is Oxysterol-binding protein-related protein 9 (736 aa).

N-acetylalanine is present on Ala-2. Positions 2–99 constitute a PH domain; sequence ASIVEGPLSK…WIHALEETIL (98 aa). Residues 209–368 are disordered; the sequence is LEPVISTMPS…RDDDGEAGSV (160 aa). The span at 253–274 shows a compositional bias: low complexity; sequence TPTPNSTGSGNSPPSSSLTPPS. A phosphoserine mark is found at Ser-306, Ser-324, Ser-325, Ser-326, and Ser-329. Polar residues-rich tracts occupy residues 314 to 329 and 336 to 348; these read SSGSASVLTHSSSGNS and TESLNSSMSNGTS. Residue Ser-611 is modified to Phosphoserine.

It belongs to the OSBP family. As to quaternary structure, heterodimer with OSBPL11. Interacts with OSBPL10.

It is found in the late endosome membrane. The protein localises to the golgi apparatus. It localises to the trans-Golgi network membrane. It catalyses the reaction a 1,2-diacyl-sn-glycero-3-phospho-(1D-myo-inositol 4-phosphate)(out) + a 1,2-diacyl-sn-glycero-3-phospho-L-serine(in) = a 1,2-diacyl-sn-glycero-3-phospho-(1D-myo-inositol 4-phosphate)(in) + a 1,2-diacyl-sn-glycero-3-phospho-L-serine(out). Its function is as follows. Interacts with OSBPL11 to function as lipid transfer proteins. Together they form a heterodimer that localizes at the ER-trans-Golgi membrane contact sites, and exchanges phosphatidylserine (1,2-diacyl-sn-glycero-3-phospho-L-serine, PS) for phosphatidylinositol-4-phosphate (1,2-diacyl-sn-glycero-3-phospho-(1D-myo-inositol 4-phosphate), PI(4)P) between the two organelles, a step that is critical for sphingomyelin synthesis in the Golgi complex. The sequence is that of Oxysterol-binding protein-related protein 9 (Osbpl9) from Mus musculus (Mouse).